Consider the following 236-residue polypeptide: Ribose-5-phosphate isomerase A (236 aa).

Substrate is bound by residues 29 to 32 (SGST), 86 to 89 (DGAD), and 99 to 102 (KGGG). The active-site Proton acceptor is the E108. K126 contributes to the substrate binding site.

Belongs to the ribose 5-phosphate isomerase family. Homodimer.

The catalysed reaction is aldehydo-D-ribose 5-phosphate = D-ribulose 5-phosphate. Its pathway is carbohydrate degradation; pentose phosphate pathway; D-ribose 5-phosphate from D-ribulose 5-phosphate (non-oxidative stage): step 1/1. In terms of biological role, catalyzes the reversible conversion of ribose-5-phosphate to ribulose 5-phosphate. This is Ribose-5-phosphate isomerase A from Prochlorococcus marinus (strain NATL2A).